The following is a 381-amino-acid chain: Fatty acid elongase 6 (381 aa).

7 helical membrane passes run 10–30, 69–89, 107–127, 153–173, 182–202, 216–236, and 280–300; these read IAAAIEVPDWVLTKSAALVYS, LPYLNPWHVIASILAYLSLIV, GLVHNLGLHLLSLYMSLGLMI, LIWLFYVSKVVEWVDTVIMLL, FLHVYHHTTVFVLWWLALLVA, GVHVFMYGYYFLTLLFPSGIV, and LLQILFWYMISLLALFGNFLV. A HxxHH motif motif is present at residues 184-188; it reads HVYHH. H187 functions as the Nucleophile in the catalytic mechanism. Residues 362 to 381 are disordered; it reads RKNGNGNGQKASLQAMAGSR.

It belongs to the ELO family.

Its subcellular location is the membrane. Its pathway is lipid metabolism; polyunsaturated fatty acid biosynthesis. Involved in the synthesis of fatty acids. Elongates C18 polyunsaturated fatty acids (PUFAs) with a preference for Delta6 PUFAs. This is Fatty acid elongase 6 from Leishmania major.